A 360-amino-acid chain; its full sequence is Ribosomal RNA large subunit methyltransferase F (360 aa).

The tract at residues 1-38 (MTRSTTPPMRAKHSSAKRSPSRSAAKVNPVSVKPNKPL) is disordered. A compositionally biased stretch (basic residues) spans 10–20 (RAKHSSAKRSP).

It belongs to the methyltransferase superfamily. METTL16/RlmF family.

The protein localises to the cytoplasm. The enzyme catalyses adenosine(1618) in 23S rRNA + S-adenosyl-L-methionine = N(6)-methyladenosine(1618) in 23S rRNA + S-adenosyl-L-homocysteine + H(+). Specifically methylates the adenine in position 1618 of 23S rRNA. In Shewanella frigidimarina (strain NCIMB 400), this protein is Ribosomal RNA large subunit methyltransferase F.